A 34-amino-acid chain; its full sequence is Histone H1, sperm (34 aa).

Positions 1 to 34 (PASPQKRAASPRRSPKKSPRKSPKKSPRKRSASP) are disordered. The span at 9-34 (ASPRRSPKKSPRKSPKKSPRKRSASP) shows a compositional bias: basic residues.

This sequence belongs to the histone H1/H5 family. Sperm.

The protein resides in the nucleus. Its subcellular location is the chromosome. Its function is as follows. Histones H1 are necessary for the condensation of nucleosome chains into higher-order structures. This is Histone H1, sperm from Strongylocentrotus purpuratus (Purple sea urchin).